The following is a 110-amino-acid chain: MSEEKPKEGVKTENDHINLKVAGQDGSVVQFKIKRHTPLSKLMKAYCERQGLSMRQIRFRFDGQPINETDTPAQLEMEDEDTIDVFQQQTGGSASRGSVPTPNRCPDLCY.

Glycyl lysine isopeptide (Lys-Gly) (interchain with G-Cter in SUMO2) cross-links involve residues lysine 5 and lysine 7. A Glycyl lysine isopeptide (Lys-Gly) (interchain with G-Cter in SUMO); alternate cross-link involves residue lysine 11. Lysine 11 is covalently cross-linked (Glycyl lysine isopeptide (Lys-Gly) (interchain with G-Cter in SUMO2); alternate). The 78-residue stretch at 15–92 folds into the Ubiquitin-like domain; that stretch reads DHINLKVAGQ…IDVFQQQTGG (78 aa). Residues 88–101 are compositionally biased toward polar residues; it reads QQTGGSASRGSVPT. Residues 88-110 are disordered; sequence QQTGGSASRGSVPTPNRCPDLCY. Glycine 92 is covalently cross-linked (Glycyl lysine isopeptide (Gly-Lys) (interchain with K-? in acceptor proteins)). The propeptide occupies 93–110; it reads SASRGSVPTPNRCPDLCY.

It belongs to the ubiquitin family. SUMO subfamily. In terms of assembly, interacts with SAE2 and UBE2I. Covalently attached to a number of proteins. Interacts with USP25 (via ts SIM domain); the interaction sumoylates USP25 and inhibits its ubiquitin hydrolyzing activity. Interacts with BMAL1. Post-translationally, polymeric chains can be formed through Lys-11 cross-linking. Cleavage of precursor form by SENP1, SENP2 or SENP5 is necessary for function.

Its subcellular location is the cytoplasm. It localises to the nucleus. The protein resides in the PML body. In terms of biological role, ubiquitin-like protein which can be covalently attached to target lysines either as a monomer or as a lysine-linked polymer. Does not seem to be involved in protein degradation and may function as an antagonist of ubiquitin in the degradation process. Plays a role in a number of cellular processes such as nuclear transport, DNA replication and repair, mitosis and signal transduction. Covalent attachment to its substrates requires prior activation by the E1 complex SAE1-SAE2 and linkage to the E2 enzyme UBE2I, and can be promoted by an E3 ligase such as PIAS1-4, RANBP2 or CBX4. Plays a role in the regulation of sumoylation status of SETX. This Mus musculus (Mouse) protein is Small ubiquitin-related modifier 3.